The following is a 117-amino-acid chain: Large ribosomal subunit protein bL20c (117 aa).

The protein belongs to the bacterial ribosomal protein bL20 family.

The protein localises to the plastid. The protein resides in the chloroplast. Functionally, binds directly to 23S ribosomal RNA and is necessary for the in vitro assembly process of the 50S ribosomal subunit. It is not involved in the protein synthesizing functions of that subunit. This Populus alba (White poplar) protein is Large ribosomal subunit protein bL20c.